The chain runs to 115 residues: Insulin (115 aa).

The N-terminal stretch at 1-22 (MAALWLQSVSLLVLMLVSWSGS) is a signal peptide. 3 disulfide bridges follow: cysteine 32–cysteine 101, cysteine 44–cysteine 114, and cysteine 100–cysteine 105. The propeptide at 56 to 92 (DVDPLLGFLPAKSGGAAAGGENEVAEFAFKDQMEMMV) is c peptide.

It belongs to the insulin family. As to quaternary structure, heterodimer of a B chain and an A chain linked by two disulfide bonds.

It localises to the secreted. Insulin decreases blood glucose concentration. It increases cell permeability to monosaccharides, amino acids and fatty acids. It accelerates glycolysis, the pentose phosphate cycle, and glycogen synthesis in liver. This Verasper moseri (Barfin flounder) protein is Insulin (ins).